The primary structure comprises 562 residues: Wee1-like protein kinase 2 (562 aa).

Disordered stretches follow at residues 1-86 and 161-181; these read MRTA…DKGV and YRQANFHPNGKRKERPEDDCS. Polar residues predominate over residues 35–48; it reads HSNQRGSPVNSWRA. Residues 217–491 form the Protein kinase domain; it reads FLEIEKIGAG…AKNSLLRRCV (275 aa). Residues 223–231 and Lys-246 contribute to the ATP site; that span reads IGAGEFGSV. The active-site Proton acceptor is the Asp-344. Mg(2+)-binding residues include Asn-349 and Asp-381. Positions 494–520 form a coiled coil; the sequence is AAQLQKQLNVEKFKTAMLERELKAAKL.

This sequence belongs to the protein kinase superfamily. Ser/Thr protein kinase family. WEE1 subfamily.

The protein localises to the nucleus. The enzyme catalyses L-tyrosyl-[protein] + ATP = O-phospho-L-tyrosyl-[protein] + ADP + H(+). Functionally, oocyte-specific protein tyrosine kinase that phosphorylates and inhibits cdk1 and acts as a regulator of meiosis. Required to maintain meiotic arrest in oocytes by phosphorylating cdk1 at 'Tyr-15', leading to inhibit cdk1 activity and prevent meiotic reentry. The protein is Wee1-like protein kinase 2 (wee2) of Xenopus tropicalis (Western clawed frog).